A 329-amino-acid polypeptide reads, in one-letter code: DNA-directed RNA polymerase subunit alpha (329 aa).

Residues 1–234 are alpha N-terminal domain (alpha-NTD); it reads MQGSVTEFLK…EQLDAFVELR (234 aa). Residues 248-329 form an alpha C-terminal domain (alpha-CTD) region; that stretch reads FDPILLRPVD…WPPASLADDL (82 aa).

The protein belongs to the RNA polymerase alpha chain family. Homodimer. The RNAP catalytic core consists of 2 alpha, 1 beta, 1 beta' and 1 omega subunit. When a sigma factor is associated with the core the holoenzyme is formed, which can initiate transcription.

The catalysed reaction is RNA(n) + a ribonucleoside 5'-triphosphate = RNA(n+1) + diphosphate. DNA-dependent RNA polymerase catalyzes the transcription of DNA into RNA using the four ribonucleoside triphosphates as substrates. The sequence is that of DNA-directed RNA polymerase subunit alpha from Shewanella putrefaciens (strain CN-32 / ATCC BAA-453).